The sequence spans 266 residues: Putative carbamate hydrolase RutD (266 aa).

Positions 14–115 (PVVVLISGLG…TMLVSVNGWL (102 aa)) constitute an AB hydrolase-1 domain.

This sequence belongs to the AB hydrolase superfamily. Hydrolase RutD family.

It carries out the reaction carbamate + 2 H(+) = NH4(+) + CO2. Its function is as follows. Involved in pyrimidine catabolism. May facilitate the hydrolysis of carbamate, a reaction that can also occur spontaneously. The protein is Putative carbamate hydrolase RutD of Shigella flexneri serotype 5b (strain 8401).